A 600-amino-acid polypeptide reads, in one-letter code: Elongation factor 4 (600 aa).

Positions 4 to 186 constitute a tr-type G domain; it reads KNVRNFCIIA…AIVNRIPPPK (183 aa). GTP-binding positions include 16–21 and 133–136; these read DHGKST and NKID.

This sequence belongs to the TRAFAC class translation factor GTPase superfamily. Classic translation factor GTPase family. LepA subfamily.

It localises to the cell inner membrane. The catalysed reaction is GTP + H2O = GDP + phosphate + H(+). In terms of biological role, required for accurate and efficient protein synthesis under certain stress conditions. May act as a fidelity factor of the translation reaction, by catalyzing a one-codon backward translocation of tRNAs on improperly translocated ribosomes. Back-translocation proceeds from a post-translocation (POST) complex to a pre-translocation (PRE) complex, thus giving elongation factor G a second chance to translocate the tRNAs correctly. Binds to ribosomes in a GTP-dependent manner. The sequence is that of Elongation factor 4 from Aquifex aeolicus (strain VF5).